A 164-amino-acid polypeptide reads, in one-letter code: Large ribosomal subunit protein uL15 (164 aa).

The segment covering 1-33 has biased composition (basic residues); the sequence is MTSKKRRQRGSRTHGGGTHKNRRGAGHRGGRGR. Disordered regions lie at residues 1 to 59 and 137 to 164; these read MTSK…PGAE and AGGSATLTEQGKSIAVGEDEEPNSNDEN. Positions 34 to 43 are enriched in basic and acidic residues; that stretch reads AGRDKHEQHN. Over residues 153 to 164 the composition is skewed to acidic residues; the sequence is GEDEEPNSNDEN.

This sequence belongs to the universal ribosomal protein uL15 family. In terms of assembly, part of the 50S ribosomal subunit.

Its function is as follows. Binds to the 23S rRNA. In Haloquadratum walsbyi (strain DSM 16790 / HBSQ001), this protein is Large ribosomal subunit protein uL15.